The chain runs to 727 residues: Non-structural protein 4 (727 aa).

Disordered stretches follow at residues 1–38 (MNQSRSFVTGRGRDLSRTPSALSSNSETPGSMSSPSEG) and 671–727 (GNSM…KLSK). Residues 17-38 (RTPSALSSNSETPGSMSSPSEG) show a composition bias toward polar residues. The segment covering 712-727 (SRRKARKARAASKLSK) has biased composition (basic residues).

This is Non-structural protein 4 from Rice dwarf virus (isolate Fujian) (RDV).